We begin with the raw amino-acid sequence, 206 residues long: LexA repressor (206 aa).

The H-T-H motif DNA-binding region spans 28-48 (RAEIATRLGFKSANAAEEHLK). Active-site for autocatalytic cleavage activity residues include Ser-123 and Lys-160.

The protein belongs to the peptidase S24 family. As to quaternary structure, homodimer.

The enzyme catalyses Hydrolysis of Ala-|-Gly bond in repressor LexA.. Its function is as follows. Represses a number of genes involved in the response to DNA damage (SOS response), including recA and lexA. In the presence of single-stranded DNA, RecA interacts with LexA causing an autocatalytic cleavage which disrupts the DNA-binding part of LexA, leading to derepression of the SOS regulon and eventually DNA repair. The polypeptide is LexA repressor (Shewanella baltica (strain OS223)).